Consider the following 342-residue polypeptide: Ribosomal RNA small subunit methyltransferase H (342 aa).

S-adenosyl-L-methionine-binding positions include 36–38 (GGH), aspartate 56, phenylalanine 82, aspartate 100, and glutamine 107. Residues 309–342 (ENRESGMGKGHGAAASRFPTPDSRFPTSPNGDAP) are disordered. Positions 333-342 (FPTSPNGDAP) are enriched in polar residues.

The protein belongs to the methyltransferase superfamily. RsmH family.

Its subcellular location is the cytoplasm. The catalysed reaction is cytidine(1402) in 16S rRNA + S-adenosyl-L-methionine = N(4)-methylcytidine(1402) in 16S rRNA + S-adenosyl-L-homocysteine + H(+). Its function is as follows. Specifically methylates the N4 position of cytidine in position 1402 (C1402) of 16S rRNA. This Xanthomonas campestris pv. campestris (strain 8004) protein is Ribosomal RNA small subunit methyltransferase H.